The following is a 333-amino-acid chain: Fructose-1,6-bisphosphatase class 1 (333 aa).

4 residues coordinate Mg(2+): glutamate 92, aspartate 113, leucine 115, and aspartate 116. Residues 116-119 (DGSS), asparagine 209, tyrosine 242, and lysine 272 each bind substrate. Glutamate 278 lines the Mg(2+) pocket.

The protein belongs to the FBPase class 1 family. Homotetramer. Mg(2+) is required as a cofactor.

The protein resides in the cytoplasm. It catalyses the reaction beta-D-fructose 1,6-bisphosphate + H2O = beta-D-fructose 6-phosphate + phosphate. It participates in carbohydrate biosynthesis; Calvin cycle. The polypeptide is Fructose-1,6-bisphosphatase class 1 (Chlorobaculum tepidum (strain ATCC 49652 / DSM 12025 / NBRC 103806 / TLS) (Chlorobium tepidum)).